The chain runs to 212 residues: Entry-fusion complex associated protein OPG083 (212 aa).

Topologically, residues 1–175 (MAETKEFKTL…IIENRLPYYD (175 aa)) are virion surface. Disulfide bonds link C33–C55, C47–C127, and C107–C149. A helical transmembrane segment spans residues 176 to 196 (PWFLVGVAIILVIFTVAICSI). Residues 197-212 (RRNLALKYRYGTFLYV) are Intravirion-facing.

This sequence belongs to the orthopoxvirus OPG053 family. As to quaternary structure, component of the entry fusion complex (EFC) composed of OPG053/F9, OPG076/O3, OPG086/G3, OPG094/G9, OPG095/L1, OPG099/L5, OPG107/H2, OPG143/A16, OPG104/J5, OPG147/A21 and OPG155/A28. Except for OPG095/L1 and OPG052/F9, each of the EFC proteins is required for assembly or stability of the complex. Disulfid bonds are oxidized in the cytoplasm by OPG088 protein. In terms of processing, unglycosylated because produced in viral factories instead of the classic ER -Golgi route.

Its subcellular location is the virion membrane. Component of the entry fusion complex (EFC), which consists of 11 proteins. During cell infection, this complex mediates entry of the virion core into the host cytoplasm by a two-step mechanism consisting of lipid mixing of the viral and cellular membranes and subsequent pore formation. This chain is Entry-fusion complex associated protein OPG083 (OPG053), found in Vaccinia virus (strain Western Reserve) (VACV).